The primary structure comprises 91 residues: Mercuric transport protein periplasmic component (91 aa).

Residues 1-19 (MKKLFASLALAAVVAPVWA) form the signal peptide. The HMA domain maps to 22-88 (QTVTLSVPGM…ATADAGYPSS (67 aa)). The Hg(2+) site is built by Cys33 and Cys36.

The protein belongs to the MerP family. As to quaternary structure, monomer.

It is found in the periplasm. Functionally, involved in mercury resistance. Acts as a mercury scavenger that specifically binds to a mercuric ion in the periplasm and probably passes it to the cytoplasmic mercuric reductase MerA via the mercuric transport protein MerT. This is Mercuric transport protein periplasmic component from Pseudomonas aeruginosa.